Here is a 443-residue protein sequence, read N- to C-terminus: Phosphoglucosamine mutase (443 aa).

Residue Ser102 is the Phosphoserine intermediate of the active site. Mg(2+) contacts are provided by Ser102, Asp241, Asp243, and Asp245. At Ser102 the chain carries Phosphoserine.

Belongs to the phosphohexose mutase family. Mg(2+) serves as cofactor. Post-translationally, activated by phosphorylation.

It catalyses the reaction alpha-D-glucosamine 1-phosphate = D-glucosamine 6-phosphate. In terms of biological role, catalyzes the conversion of glucosamine-6-phosphate to glucosamine-1-phosphate. The protein is Phosphoglucosamine mutase of Polaromonas sp. (strain JS666 / ATCC BAA-500).